A 411-amino-acid polypeptide reads, in one-letter code: tRNA (uracil(54)-C(5))-methyltransferase (411 aa).

[4Fe-4S] cluster contacts are provided by Cys62, Cys68, Cys71, and Cys138. Residues Gln254, Tyr280, Thr285, 301–302 (DS), Asp328, and Asp342 contribute to the S-adenosyl-L-methionine site. The active-site Nucleophile is the Cys369. Glu402 serves as the catalytic Proton acceptor.

It belongs to the class I-like SAM-binding methyltransferase superfamily. RNA M5U methyltransferase family.

It carries out the reaction uridine(54) in tRNA + S-adenosyl-L-methionine = 5-methyluridine(54) in tRNA + S-adenosyl-L-homocysteine + H(+). Catalyzes the formation of 5-methyl-uridine at position 54 (m5U54) in tRNA. This is tRNA (uracil(54)-C(5))-methyltransferase from Pyrococcus furiosus (strain ATCC 43587 / DSM 3638 / JCM 8422 / Vc1).